Consider the following 251-residue polypeptide: Small ribosomal subunit protein uS3 (251 aa).

Residues 39-112 enclose the KH type-2 domain; that stretch reads IRKYINEVYA…NIILNVVEVR (74 aa). The segment at 222-251 is disordered; the sequence is EEKKPAKKFNKKPVAAKPANKEEKSSKEVK. A compositionally biased stretch (basic and acidic residues) spans 240-251; sequence ANKEEKSSKEVK.

It belongs to the universal ribosomal protein uS3 family. In terms of assembly, part of the 30S ribosomal subunit. Forms a tight complex with proteins S10 and S14.

Its function is as follows. Binds the lower part of the 30S subunit head. Binds mRNA in the 70S ribosome, positioning it for translation. The protein is Small ribosomal subunit protein uS3 of Anaeroplasma abactoclasticum.